Consider the following 499-residue polypeptide: Taxadiene 5-alpha hydroxylase (499 aa).

Residues 22–42 traverse the membrane as a helical; Signal-anchor segment; that stretch reads TESFSIALSAIAGILLLLLLF. Heme is bound at residue Cys445.

It belongs to the cytochrome P450 family. It depends on heme as a cofactor.

The protein resides in the membrane. It carries out the reaction taxa-4(5),11(12)-diene + reduced [NADPH--hemoprotein reductase] + O2 = taxa-4(20),11-dien-5alpha-ol + oxidized [NADPH--hemoprotein reductase] + H2O + H(+). It functions in the pathway alkaloid biosynthesis; taxol biosynthesis; taxa-4(20),11-dien-5alpha-ol from geranylgeranyl diphosphate: step 2/2. Its function is as follows. Catalyzes the first oxygenation step of taxol biosynthesis. Can use both taxa-4(5),11(12)-diene and taxa-4(20),11(12)-diene as substrate. In Taxus cuspidata (Japanese yew), this protein is Taxadiene 5-alpha hydroxylase.